The chain runs to 406 residues: Glutamyl-tRNA(Gln) amidotransferase subunit D (406 aa).

Residues 68–390 (KSISILATGG…EEFINVFNRN (323 aa)) form the Asparaginase/glutaminase domain. Residues threonine 78, threonine 152, aspartate 153, and lysine 230 contribute to the active site.

The protein belongs to the asparaginase 1 family. GatD subfamily. Heterodimer of GatD and GatE.

The enzyme catalyses L-glutamyl-tRNA(Gln) + L-glutamine + ATP + H2O = L-glutaminyl-tRNA(Gln) + L-glutamate + ADP + phosphate + H(+). Functionally, allows the formation of correctly charged Gln-tRNA(Gln) through the transamidation of misacylated Glu-tRNA(Gln) in organisms which lack glutaminyl-tRNA synthetase. The reaction takes place in the presence of glutamine and ATP through an activated gamma-phospho-Glu-tRNA(Gln). The GatDE system is specific for glutamate and does not act on aspartate. This chain is Glutamyl-tRNA(Gln) amidotransferase subunit D, found in Thermoplasma volcanium (strain ATCC 51530 / DSM 4299 / JCM 9571 / NBRC 15438 / GSS1).